Reading from the N-terminus, the 371-residue chain is Ecto-ADP-ribosyltransferase 3 (371 aa).

An N-terminal signal peptide occupies residues 1–26 (MKMGHFEMVTTLLAAAVLMDIFQVKA). A disulfide bridge connects residues C43 and C255. A TR mART core domain is found at 64-250 (ALLRMVWDNA…LVLQSINSTC (187 aa)). Residues Y101 and N182 each coordinate NAD(+). The tract at residues 306-346 (VLQTEENPLLPDEKPDRSRGKANNPTPGLVPGPKSHPSASS) is disordered. S345 carries GPI-anchor amidated serine lipidation. A propeptide spans 346 to 371 (SGNTLLPSVMASTILLVASAVNFIEL) (removed in mature form).

It belongs to the Arg-specific ADP-ribosyltransferase family.

It localises to the cell membrane. It carries out the reaction L-arginyl-[protein] + NAD(+) = N(omega)-(ADP-D-ribosyl)-L-arginyl-[protein] + nicotinamide + H(+). This Mus musculus (Mouse) protein is Ecto-ADP-ribosyltransferase 3 (Art3).